The following is a 184-amino-acid chain: Peptide deformylase (184 aa).

Fe cation-binding residues include Cys92 and His134. Residue Glu135 is part of the active site. His138 provides a ligand contact to Fe cation.

This sequence belongs to the polypeptide deformylase family. Fe(2+) serves as cofactor.

It catalyses the reaction N-terminal N-formyl-L-methionyl-[peptide] + H2O = N-terminal L-methionyl-[peptide] + formate. Removes the formyl group from the N-terminal Met of newly synthesized proteins. Requires at least a dipeptide for an efficient rate of reaction. N-terminal L-methionine is a prerequisite for activity but the enzyme has broad specificity at other positions. This chain is Peptide deformylase, found in Psychrobacter cryohalolentis (strain ATCC BAA-1226 / DSM 17306 / VKM B-2378 / K5).